The primary structure comprises 432 residues: Serine--tRNA ligase (432 aa).

235–237 (TSE) provides a ligand contact to L-serine. 266–268 (RSE) serves as a coordination point for ATP. An L-serine-binding site is contributed by glutamate 289. 353–356 (EISS) is an ATP binding site. Serine 388 lines the L-serine pocket.

Belongs to the class-II aminoacyl-tRNA synthetase family. Type-1 seryl-tRNA synthetase subfamily. Homodimer. The tRNA molecule binds across the dimer.

The protein localises to the cytoplasm. It carries out the reaction tRNA(Ser) + L-serine + ATP = L-seryl-tRNA(Ser) + AMP + diphosphate + H(+). The enzyme catalyses tRNA(Sec) + L-serine + ATP = L-seryl-tRNA(Sec) + AMP + diphosphate + H(+). It participates in aminoacyl-tRNA biosynthesis; selenocysteinyl-tRNA(Sec) biosynthesis; L-seryl-tRNA(Sec) from L-serine and tRNA(Sec): step 1/1. Its function is as follows. Catalyzes the attachment of serine to tRNA(Ser). Is also able to aminoacylate tRNA(Sec) with serine, to form the misacylated tRNA L-seryl-tRNA(Sec), which will be further converted into selenocysteinyl-tRNA(Sec). This is Serine--tRNA ligase from Paraburkholderia phymatum (strain DSM 17167 / CIP 108236 / LMG 21445 / STM815) (Burkholderia phymatum).